The sequence spans 527 residues: Catalase (527 aa).

N-acetylalanine is present on A2. The residue at position 9 (S9) is a Phosphoserine. Residues H75 and N148 contribute to the active site. The NADP(+) site is built by H194, S201, R203, and N213. K221 bears the N6-succinyllysine mark. K233 bears the N6-acetyllysine mark. Residues K237, W303, H305, and K306 each coordinate NADP(+). K306 bears the N6-acetyllysine; alternate mark. Residue K306 is modified to N6-succinyllysine; alternate. A heme-binding site is contributed by Y358. Phosphoserine is present on residues S417 and S422. K480 carries the N6-acetyllysine; alternate modification. An N6-succinyllysine; alternate modification is found at K480. K499 bears the N6-acetyllysine mark. Residue T511 is modified to Phosphothreonine. S515 and S517 each carry phosphoserine. A Microbody targeting signal; atypical motif is present at residues 524-527 (KANL).

Belongs to the catalase family. In terms of assembly, homotetramer. Interacts (via microbody targeting signal) with PEX5, monomeric form interacts with PEX5, leading to its translocation into peroxisomes. The cofactor is heme. It depends on NADP(+) as a cofactor.

The protein localises to the peroxisome matrix. It carries out the reaction 2 H2O2 = O2 + 2 H2O. Its function is as follows. Catalyzes the degradation of hydrogen peroxide (H(2)O(2)) generated by peroxisomal oxidases to water and oxygen, thereby protecting cells from the toxic effects of hydrogen peroxide. Promotes growth of cells including T-cells, B-cells, myeloid leukemia cells, melanoma cells, mastocytoma cells and normal and transformed fibroblast cells. This chain is Catalase (CAT), found in Homo sapiens (Human).